A 34-amino-acid polypeptide reads, in one-letter code: Photosystem I reaction center subunit XII (34 aa).

Residues 10–32 form a helical membrane-spanning segment; that stretch reads IYIALVVAAHAAILALRLSVSLY.

The protein belongs to the PsaM family.

It localises to the cellular thylakoid membrane. In Synechococcus sp. (strain RCC307), this protein is Photosystem I reaction center subunit XII.